The primary structure comprises 679 residues: Glycine--tRNA ligase beta subunit (679 aa).

Belongs to the class-II aminoacyl-tRNA synthetase family. As to quaternary structure, tetramer of two alpha and two beta subunits.

Its subcellular location is the cytoplasm. The catalysed reaction is tRNA(Gly) + glycine + ATP = glycyl-tRNA(Gly) + AMP + diphosphate. The chain is Glycine--tRNA ligase beta subunit from Streptococcus uberis (strain ATCC BAA-854 / 0140J).